We begin with the raw amino-acid sequence, 383 residues long: ATP phosphoribosyltransferase regulatory subunit (383 aa).

Belongs to the class-II aminoacyl-tRNA synthetase family. HisZ subfamily. Heteromultimer composed of HisG and HisZ subunits.

The protein resides in the cytoplasm. The protein operates within amino-acid biosynthesis; L-histidine biosynthesis; L-histidine from 5-phospho-alpha-D-ribose 1-diphosphate: step 1/9. Functionally, required for the first step of histidine biosynthesis. May allow the feedback regulation of ATP phosphoribosyltransferase activity by histidine. The protein is ATP phosphoribosyltransferase regulatory subunit of Neisseria gonorrhoeae (strain NCCP11945).